An 869-amino-acid chain; its full sequence is Phosphatidylethanolamine N-methyltransferase (869 aa).

Position 2 is an N-acetylserine (Ser-2). Residues 2 to 55 (SSCKTTLSEMVGSVTKDRGTINVEARTRSSNVTFKPPVTHDMVRSLFDPTLKKS) lie on the Lumenal side of the membrane. Residues 56–76 (LLEKCIALAIISNFFICYWVF) form a helical membrane-spanning segment. Residues 77–86 (QRFGLQFTKY) are Cytoplasmic-facing. Residues 87–107 (FFLVQYLFWRIAYNLGIGLVL) traverse the membrane as a helical segment. At 108–187 (HYQSHYETLT…EINVWLIFRQ (80 aa)) the chain is on the lumenal side. Residues 188 to 208 (FVDLILMQDFVTYIIYVYLSI) form a helical membrane-spanning segment. Topologically, residues 209–212 (PYSW) are cytoplasmic. The chain crosses the membrane as a helical span at residues 213–233 (VQIFNWRSLLGVILILFNIWV). Topologically, residues 234–258 (KLDAHRVVKDYAWYWGDFFFLEESE) are lumenal. The chain crosses the membrane as a helical span at residues 259–279 (LIFDGVFNISPHPMYSIGYLG). Topologically, residues 280–291 (YYGLSLICNDYK) are cytoplasmic. A helical transmembrane segment spans residues 292–310 (VLLVSVFGHYSQFLFLKYV). At 311–362 (ENPHIERTYGDGTDSDSQMNSRIDDLISKENYDYSRPLINMGLSFNNFNKLR) the chain is on the lumenal side. A helical membrane pass occupies residues 363–383 (FTDYFTIGTVAALMLGTIMNA). The Cytoplasmic portion of the chain corresponds to 384 to 389 (RFINLN). A helical membrane pass occupies residues 390 to 410 (YLFITVFVTKLVSWLFISTIL). Residues 411 to 439 (YKQSQSKWFTRLFLENGYTQVYSYEQWQF) lie on the Lumenal side of the membrane. A helical membrane pass occupies residues 440 to 460 (IYNYYLVLTYTLMIIHTGLQI). The Cytoplasmic segment spans residues 461-463 (WSN). Residues 464–484 (FSNINNSQLIFGLILVALQTW) traverse the membrane as a helical segment. Residues 485–534 (CDKETRLAISDFGWFYGDFFLSNYISTRKLTSQGIYRYLNHPEAVLGVVG) lie on the Lumenal side of the membrane. Residues 535–555 (VWGTVLMTNFAVTNIILAVLW) traverse the membrane as a helical segment. Residues 556-869 (TLTNFILVKF…DIKQTLDSLA (314 aa)) lie on the Cytoplasmic side of the membrane.

It belongs to the class VI-like SAM-binding methyltransferase superfamily. CHO2 family.

The protein localises to the endoplasmic reticulum membrane. It carries out the reaction a 1,2-diacyl-sn-glycero-3-phosphoethanolamine + S-adenosyl-L-methionine = a 1,2-diacyl-sn-glycero-3-phospho-N-methylethanolamine + S-adenosyl-L-homocysteine + H(+). The protein operates within phospholipid metabolism; phosphatidylcholine biosynthesis. Functionally, catalyzes the first step of the methylation pathway of phosphatidylcholine biosynthesis, the SAM-dependent methylation of phosphatidylethanolamine (PE) to phosphatidylmonomethylethanolamine (PMME). Preferentially converts di-C16:1 substrates. The sequence is that of Phosphatidylethanolamine N-methyltransferase from Saccharomyces cerevisiae (strain ATCC 204508 / S288c) (Baker's yeast).